The sequence spans 430 residues: Adenylosuccinate synthetase (430 aa).

Residues 12–18 and 40–42 each bind GTP; these read GDEGKGK and GHT. Residue Asp13 is the Proton acceptor of the active site. Mg(2+)-binding residues include Asp13 and Gly40. Residues 13-16, 38-41, Thr128, Arg142, Gln223, Thr238, and Arg302 contribute to the IMP site; these read DEGK and NAGH. The Proton donor role is filled by His41. 298 to 304 serves as a coordination point for substrate; it reads TTTGRPR. GTP is bound by residues Arg304, 330 to 332, and 412 to 414; these read SID and SVG.

It belongs to the adenylosuccinate synthetase family. In terms of assembly, homodimer. Mg(2+) is required as a cofactor.

Its subcellular location is the cytoplasm. The enzyme catalyses IMP + L-aspartate + GTP = N(6)-(1,2-dicarboxyethyl)-AMP + GDP + phosphate + 2 H(+). It functions in the pathway purine metabolism; AMP biosynthesis via de novo pathway; AMP from IMP: step 1/2. Its function is as follows. Plays an important role in the de novo pathway of purine nucleotide biosynthesis. Catalyzes the first committed step in the biosynthesis of AMP from IMP. This is Adenylosuccinate synthetase from Streptococcus pyogenes serotype M6 (strain ATCC BAA-946 / MGAS10394).